Reading from the N-terminus, the 95-residue chain is Cobalt transport protein CbiN (95 aa).

Transmembrane regions (helical) follow at residues 5-25 and 67-87; these read HIIL…IYAG and LLFA…IGYY.

Belongs to the CbiN family. In terms of assembly, forms an energy-coupling factor (ECF) transporter complex composed of an ATP-binding protein (A component, CbiO), a transmembrane protein (T component, CbiQ) and 2 possible substrate-capture proteins (S components, CbiM and CbiN) of unknown stoichimetry.

It is found in the cell membrane. It functions in the pathway cofactor biosynthesis; adenosylcobalamin biosynthesis. In terms of biological role, part of the energy-coupling factor (ECF) transporter complex CbiMNOQ involved in cobalt import. This chain is Cobalt transport protein CbiN, found in Methanocaldococcus jannaschii (strain ATCC 43067 / DSM 2661 / JAL-1 / JCM 10045 / NBRC 100440) (Methanococcus jannaschii).